The primary structure comprises 442 residues: Testican-1 (442 aa).

The N-terminal stretch at 1–21 (MPAIAVLAAAAAAWCFLQVDS) is a signal peptide. Intrachain disulfides connect Cys89/Cys100, Cys94/Cys110, Cys139/Cys169, Cys142/Cys162, Cys151/Cys183, Cys316/Cys340, Cys351/Cys358, and Cys360/Cys379. The Kazal-like domain occupies 133–185 (PSNLVKCKPCPVAQSAMVCGSDGHTYTSKCKLEFHACSTGKSLNSLCDGPCPC). Residues 313-379 (GLPCQNEMNR…GSRKQGTVSC (67 aa)) enclose the Thyroglobulin type-1 domain. Disordered regions lie at residues 375 to 395 (GTVS…GGSV) and 420 to 442 (TRAV…GYIW). Ser386 and Ser391 each carry an O-linked (Xyl...) (glycosaminoglycan) serine glycan. Acidic residues predominate over residues 425–442 (EDDEDEDDDKEDEVGYIW).

Post-translationally, contains chondroitin sulfate and heparan sulfate O-linked oligosaccharides. Predominantly expressed in the postsynaptic area of pyramidal neurons.

The protein resides in the secreted. It localises to the extracellular space. Its subcellular location is the extracellular matrix. Functionally, may play a role in cell-cell and cell-matrix interactions. May contribute to various neuronal mechanisms in the central nervous system. The sequence is that of Testican-1 (Spock1) from Mus musculus (Mouse).